The following is a 189-amino-acid chain: dCTP deaminase (189 aa).

Residues 112–117 (KSTYAR), 136–138 (TLE), Gln-157, Tyr-171, and Gln-181 each bind dCTP. The active-site Proton donor/acceptor is the Glu-138.

This sequence belongs to the dCTP deaminase family. Homotrimer.

It carries out the reaction dCTP + H2O + H(+) = dUTP + NH4(+). Its pathway is pyrimidine metabolism; dUMP biosynthesis; dUMP from dCTP (dUTP route): step 1/2. Catalyzes the deamination of dCTP to dUTP. The polypeptide is dCTP deaminase (Xanthomonas campestris pv. campestris (strain 8004)).